The primary structure comprises 395 residues: Endophilin-B2 (395 aa).

Met-1 is modified (N-acetylmethionine). The membrane-binding amphipathic helix stretch occupies residues 1–27; sequence MDFNMKKLASDAGIFFTRAVQFTEEKF. The residue at position 10 (Ser-10) is a Phosphoserine. A BAR domain is found at 24–287; the sequence is EEKFGQAEKT…LGRFPGTFVG (264 aa). Coiled-coil stretches lie at residues 116–132 and 206–240; these read IKVA…ERDF and ASAL…LLLE. Residues 335-395 form the SH3 domain; that stretch reads SGTRKARVLY…VPVTYLELLS (61 aa). Ser-395 is modified (phosphoserine).

It belongs to the endophilin family. In terms of assembly, homodimer, and heterodimer with SH3GLB1.

Its subcellular location is the cytoplasm. The protein is Endophilin-B2 (SH3GLB2) of Bos taurus (Bovine).